The sequence spans 1507 residues: Nonribosomal peptide synthetase ataP (1507 aa).

One can recognise a Carrier 1 domain in the interval 1–72 (MQINIRNEIA…DIISRSTGMY (72 aa)). O-(pantetheine 4'-phosphoryl)serine is present on S33. The interval 98-119 (TPSPSPSGPSTGCPTPDTLDTT) is disordered. A compositionally biased stretch (low complexity) spans 105–115 (GPSTGCPTPDT). Residues 163 to 429 (TRMAWQQVLE…NRVFRQLVQL (267 aa)) are condensation 1. The adenylation stretch occupies residues 514–893 (AAAENPEACA…GRNDRQIKLR (380 aa)). In terms of domain architecture, Carrier 2 spans 988–1065 (NEMSPTEQRV…DLSQRIDKLQ (78 aa)). The residue at position 1025 (S1025) is an O-(pantetheine 4'-phosphoryl)serine. The segment at 1099-1471 (TSNTSFTVSF…MTALRLLIKN (373 aa)) is condensation 2.

Belongs to the NRP synthetase family.

Its pathway is mycotoxin biosynthesis. Nonribosomal peptide synthetase; part of the gene cluster that mediates the biosynthesis of acetylaranotin, a member of the epipolythiodioxopiperazine (ETP) class of toxins characterized by a disulfide-bridged cyclic dipeptide. The first step of acetylaranotin biosynthesis is performed by the NRPS ataP which produces diketopiperazine cyclo-L-Phe-L-Phe via the condensation of 2 phenylalanines (L-Phe). The ataC domain of ataTC then catalyzes the formation of bishydroxylation of cyclo-L-Phe-L-Phe. The glutathione S-transferase domain ataG in ataIMG further catalyzes the conjugation of two glutathiones to the bishydroxylated intermediate. Next, the dipeptidase ataJ removes the Glu residues. The following step is performed by the carbon sulfur lyase domain ataI of ataIMG which may convert the bis-cysteinyl adduct to yield an epidithiol intermediate. The ataT domain from ataTC then catalyzes the oxidation of the free dithiols, followed by a cyclization step catalyzed by the cytochrome P450 ataF. AtaF probably acts as an epoxidase to promote a dual epoxidation formation at C8 and C9 along with C8' and C9', followed by the spontaneous nucleophilic attack of the amide nitrogens N10 and N10' to yield an intermediate with the pyrrolidine partial structure. The final steps of acetylaranotin biosynthesis involve the acetylation and ring rearrangement of an epitetrathiodiketopiperazine intermediate to produce acetylaranotin. AtaH probably catalyzes the acetylation of epitetrathiodiketopiperazine to produce a diacetate and ataY is responsible for the formation of the dihydrooxepin moiety that converts the diacetate intermediate to acetylaranotin via acetylapoaranotin. Both enzymes could function independently in the absence of the other. The acetylaranotin bis-thiomethyltransferase ataS located outside of acetylaranotin gene cluster is the main thiomethyltransferase responsible for converting acetylaranotin and its related intermediates to their methylated forms. The polypeptide is Nonribosomal peptide synthetase ataP (Aspergillus terreus (strain NIH 2624 / FGSC A1156)).